We begin with the raw amino-acid sequence, 245 residues long: MVPWLGPDDPFPPVERALSAASGAPGLLAASADLLPSRLIDAYRRGIFPWYSDGQPVLWWTPDPRMILRPREFKISPSLKKTLRRVLRDDTWEIRVDADFPAVMRACALAPRHGQRGTWITSDVIDAYSTLHRRGEAHSIETWHAGKRVGGLYGVSFGKMFFGESMYAEVTDASKIALSALVFHLRRHEIEMIDCQQNTSHLASLGGREIARKAFVAHVRAAVDSAPIPWSFDKSVLRDLLAPAQ.

It belongs to the L/F-transferase family.

It localises to the cytoplasm. It carries out the reaction N-terminal L-lysyl-[protein] + L-leucyl-tRNA(Leu) = N-terminal L-leucyl-L-lysyl-[protein] + tRNA(Leu) + H(+). The catalysed reaction is N-terminal L-arginyl-[protein] + L-leucyl-tRNA(Leu) = N-terminal L-leucyl-L-arginyl-[protein] + tRNA(Leu) + H(+). The enzyme catalyses L-phenylalanyl-tRNA(Phe) + an N-terminal L-alpha-aminoacyl-[protein] = an N-terminal L-phenylalanyl-L-alpha-aminoacyl-[protein] + tRNA(Phe). Functionally, functions in the N-end rule pathway of protein degradation where it conjugates Leu, Phe and, less efficiently, Met from aminoacyl-tRNAs to the N-termini of proteins containing an N-terminal arginine or lysine. The polypeptide is Leucyl/phenylalanyl-tRNA--protein transferase (Paraburkholderia phymatum (strain DSM 17167 / CIP 108236 / LMG 21445 / STM815) (Burkholderia phymatum)).